Reading from the N-terminus, the 84-residue chain is UPF0457 protein BT9727_2307 (84 aa).

It belongs to the UPF0457 family.

This is UPF0457 protein BT9727_2307 from Bacillus thuringiensis subsp. konkukian (strain 97-27).